Consider the following 142-residue polypeptide: Large ribosomal subunit protein uL13 (142 aa).

Belongs to the universal ribosomal protein uL13 family. Part of the 50S ribosomal subunit.

In terms of biological role, this protein is one of the early assembly proteins of the 50S ribosomal subunit, although it is not seen to bind rRNA by itself. It is important during the early stages of 50S assembly. This Alcanivorax borkumensis (strain ATCC 700651 / DSM 11573 / NCIMB 13689 / SK2) protein is Large ribosomal subunit protein uL13.